Reading from the N-terminus, the 654-residue chain is Macrolide export ATP-binding/permease protein MacB (654 aa).

In terms of domain architecture, ABC transporter spans 6-244 (IEISALNRIF…TSASSATDAA (239 aa)). 42–49 (GTSGSGKS) provides a ligand contact to ATP. 4 consecutive transmembrane segments (helical) span residues 279-299 (LLTMLGIIIGITAVVSIVAIG), 534-554 (IAVISLIVGGIGVMNIMLVSV), 584-604 (MVCLIGGGIGILLSFGVGALF), and 617-637 (VTAIVSAVVCSSLIGVLFGFL).

It belongs to the ABC transporter superfamily. Macrolide exporter (TC 3.A.1.122) family. As to quaternary structure, homodimer. Part of the tripartite efflux system MacAB-TolC, which is composed of an inner membrane transporter, MacB, a periplasmic membrane fusion protein, MacA, and an outer membrane component, TolC. The complex forms a large protein conduit and can translocate molecules across both the inner and outer membranes. Interacts with MacA.

The protein localises to the cell inner membrane. Its function is as follows. Part of the tripartite efflux system MacAB-TolC. MacB is a non-canonical ABC transporter that contains transmembrane domains (TMD), which form a pore in the inner membrane, and an ATP-binding domain (NBD), which is responsible for energy generation. Confers resistance against macrolides. The protein is Macrolide export ATP-binding/permease protein MacB of Hahella chejuensis (strain KCTC 2396).